We begin with the raw amino-acid sequence, 289 residues long: Acetyl-coenzyme A carboxylase carboxyl transferase subunit beta 2 (289 aa).

The CoA carboxyltransferase N-terminal domain maps to 25-289 (VWTKCPSCEQ…TNKSIQPEAE (265 aa)). The Zn(2+) site is built by C29, C32, C48, and C51. Residues 29–51 (CPSCEQVLYRIALKENLEVCPKC) form a C4-type zinc finger.

Belongs to the AccD/PCCB family. As to quaternary structure, acetyl-CoA carboxylase is a heterohexamer composed of biotin carboxyl carrier protein (AccB), biotin carboxylase (AccC) and two subunits each of ACCase subunit alpha (AccA) and ACCase subunit beta (AccD). Zn(2+) serves as cofactor.

The protein resides in the cytoplasm. It carries out the reaction N(6)-carboxybiotinyl-L-lysyl-[protein] + acetyl-CoA = N(6)-biotinyl-L-lysyl-[protein] + malonyl-CoA. It participates in lipid metabolism; malonyl-CoA biosynthesis; malonyl-CoA from acetyl-CoA: step 1/1. Its function is as follows. Component of the acetyl coenzyme A carboxylase (ACC) complex. Biotin carboxylase (BC) catalyzes the carboxylation of biotin on its carrier protein (BCCP) and then the CO(2) group is transferred by the transcarboxylase to acetyl-CoA to form malonyl-CoA. The protein is Acetyl-coenzyme A carboxylase carboxyl transferase subunit beta 2 of Vibrio campbellii (strain ATCC BAA-1116).